A 227-amino-acid chain; its full sequence is Octanoyltransferase (227 aa).

A BPL/LPL catalytic domain is found at E47–V223. Substrate-binding positions include R87–H94, A154–G156, and G167–A169. The active-site Acyl-thioester intermediate is C185.

Belongs to the LipB family.

The protein resides in the cytoplasm. It carries out the reaction octanoyl-[ACP] + L-lysyl-[protein] = N(6)-octanoyl-L-lysyl-[protein] + holo-[ACP] + H(+). Its pathway is protein modification; protein lipoylation via endogenous pathway; protein N(6)-(lipoyl)lysine from octanoyl-[acyl-carrier-protein]: step 1/2. Catalyzes the transfer of endogenously produced octanoic acid from octanoyl-acyl-carrier-protein onto the lipoyl domains of lipoate-dependent enzymes. Lipoyl-ACP can also act as a substrate although octanoyl-ACP is likely to be the physiological substrate. This Azoarcus sp. (strain BH72) protein is Octanoyltransferase.